The primary structure comprises 163 residues: Staphylokinase (163 aa).

Residues 1-27 form the signal peptide; that stretch reads MLKRGLLFLTVLLLLFSFSSITNEVSA.

It belongs to the staphylokinase family.

The protein resides in the secreted. In terms of biological role, potent plasminogen activator that converts plasminogen into plasmin. It forms a 1:1 complex with plasmin, which in turn activates other plasminogen molecules. This is Staphylokinase (sak) from Staphylococcus aureus (strain MRSA252).